The following is a 155-amino-acid chain: Microsomal glutathione S-transferase 1 (155 aa).

The Lumenal portion of the chain corresponds to 3–9 (DLKQLMD). Residues 10-33 (NEVLMAFTSYATIILAKMMFLSSA) traverse the membrane as a helical segment. Residues 34-62 (TAFQRLTNKVFANPEDCAGFGKGENAKKF) are Cytoplasmic-facing. Arg-38 serves as a coordination point for glutathione. 3 positions are modified to N6-acetyllysine: Lys-42, Lys-55, and Lys-60. Residues 63–96 (LRTDEKVERVRRAHLNDLENIVPFLGIGLLYSLS) traverse the membrane as a helical segment. Arg-73, Arg-74, His-76, and Glu-81 together coordinate glutathione. 3'-nitrotyrosine; in vitro is present on Tyr-93. At 97 to 99 (GPD) the chain is on the lumenal side. A helical transmembrane segment spans residues 100-123 (LSTALIHFRIFVGARIYHTIAYLT). A glutathione-binding site is contributed by Tyr-121. Over 124-128 (PLPQP) the chain is Cytoplasmic. A helical membrane pass occupies residues 129–148 (NRGLAFFVGYGVTLSMAYRL). The Lumenal segment spans residues 149–155 (LRSRLYL).

The protein belongs to the MAPEG family. Homotrimer; The trimer binds only one molecule of glutathione. Post-translationally, in vitro, peroxynitrite induces nitration at Tyr-93 which activates the enzyme. Highest in the liver, followed by kidney and testis and much lower in seminal vesicles, spleen, lung and brain.

Its subcellular location is the endoplasmic reticulum membrane. It localises to the mitochondrion outer membrane. The enzyme catalyses RX + glutathione = an S-substituted glutathione + a halide anion + H(+). In vitro, can be activated by reagents that attack Cys-50 sulfhydryl, such as N-ethylmaleimide and via nitration of Tyr-93 by peroxynitrite. Its function is as follows. Conjugation of reduced glutathione to a wide number of exogenous and endogenous hydrophobic electrophiles. The chain is Microsomal glutathione S-transferase 1 (Mgst1) from Rattus norvegicus (Rat).